Here is a 419-residue protein sequence, read N- to C-terminus: MKFTELTVTEFDNFVQNPSLESHYFQVKENIVTRENDGFEVVLLGIKDDNNKVIAASLFSKIPTMGSYVYYSNRGPVMDFSDLGLVDYYLKELDKYLQQHQCLYVKLDPYWLYHLYDKDIVPFEGREKNDALVNLFKSHGYEHHGFTTEYDTSSQVRWMGVLNLEGKTPETLKKTFDSQRKRNINKAINYGVKVRFLERDEFNLFLDLYRETEERAGFVSKTDDYFYNFIDTYGDKVLVPLAYIDLDEYVLKLQQELNDKENRRDQMMAKENKSDKQMKKIAELDKQIDHDQHELLNASELSKTDGPILNLASGVYFANAYEVNYFSGGSSEKYNQFMGPYMMHWFMINYCFDNGYDRYNFYGLSGDFTENSEDYGVYRFKRGFNVQIEELIGDFYKPIHKVKYWLFTTLDKLRKKLKK.

The protein belongs to the FemABX family. Homodimer. Interacts with FemA.

It is found in the cytoplasm. It carries out the reaction MurNAc-L-Ala-D-isoglutaminyl-L-Lys-(N(6)-tri-Gly)-D-Ala-D-Ala-diphospho-di-trans,octa-cis-undecaprenyl-GlcNAc + 2 glycyl-tRNA(Gly) = MurNAc-L-Ala-D-isoglutaminyl-L-Lys-(N(6)-penta-Gly)-D-Ala-D-Ala-diphospho-di-trans,octa-cis-undecaprenyl-GlcNAc + 2 tRNA(Gly) + 2 H(+). Catalyzes the formation of the pentaglycine interpeptide bridge, which is characteristic of the S.aureus peptidoglycan. Adds glycines 4 and 5 of the pentaglycine bridge, using glycyl-tRNA(Gly) as donor. Involved in resistance to methicillin. This Staphylococcus aureus (strain NCTC 8325 / PS 47) protein is Aminoacyltransferase FemB (femB).